Consider the following 340-residue polypeptide: Putative UPF0607 protein ENSP00000332738 (340 aa).

The span at 75 to 90 shows a compositional bias: basic and acidic residues; the sequence is VRAEEPKEATEVKDQV. 2 disordered regions span residues 75-130 and 215-281; these read VRAE…NPRP and GLLM…KLPC. Residues 91-126 show a composition bias toward polar residues; it reads ETQGQEDNKTGPCSNGKAASTSRPLETQGNLTSSWY. Residues 228-241 are compositionally biased toward low complexity; the sequence is PAALRSSRSSPPRA. Residues 242 to 251 show a composition bias toward basic residues; sequence AGHRPRKRKL. Low complexity predominate over residues 254 to 266; sequence PPLQLQQTPPLQL.

Belongs to the UPF0607 family.

This Homo sapiens (Human) protein is Putative UPF0607 protein ENSP00000332738.